The sequence spans 290 residues: MDKIIKSIAQSGAFRAYVLDSTETVALAQEKHNTLSSSTVALGRTLIANQILAANQKGDSKITVKVIGDSSFGHIISVADTKGHVKGYIQNTGVDIKKTATGEVLVGPFMGNGHFVTIIDYGTGNPYASTTPLITGEIGEDFAYYLTESEQTPSAIGLNVLLDENDKVKVAGGFMVQVLPGASEEEIARYEKRLQEMPAISHLLASKNHVDALLEAIYGDEPYKRLSEEPLSFQCDCSRERFEAALMTLPKADLQAMIDEDKGAEIVCQFCGTKYQFNESDLEALINDKA.

2 disulfides stabilise this stretch: cysteine 235/cysteine 237 and cysteine 268/cysteine 271.

This sequence belongs to the HSP33 family. Under oxidizing conditions two disulfide bonds are formed involving the reactive cysteines. Under reducing conditions zinc is bound to the reactive cysteines and the protein is inactive.

The protein localises to the cytoplasm. Its function is as follows. Redox regulated molecular chaperone. Protects both thermally unfolding and oxidatively damaged proteins from irreversible aggregation. Plays an important role in the bacterial defense system toward oxidative stress. The sequence is that of 33 kDa chaperonin from Streptococcus pyogenes serotype M4 (strain MGAS10750).